We begin with the raw amino-acid sequence, 252 residues long: 5'-nucleotidase SurE (252 aa).

A divalent metal cation contacts are provided by Asp8, Asp9, Ser39, and Asn91.

This sequence belongs to the SurE nucleotidase family. Requires a divalent metal cation as cofactor.

The protein localises to the cytoplasm. The enzyme catalyses a ribonucleoside 5'-phosphate + H2O = a ribonucleoside + phosphate. In terms of biological role, nucleotidase that shows phosphatase activity on nucleoside 5'-monophosphates. The chain is 5'-nucleotidase SurE from Legionella pneumophila (strain Paris).